A 135-amino-acid chain; its full sequence is Large ribosomal subunit protein eL32 (135 aa).

It belongs to the eukaryotic ribosomal protein eL32 family.

The sequence is that of Large ribosomal subunit protein eL32 from Methanococcus maripaludis (strain C5 / ATCC BAA-1333).